Here is a 199-residue protein sequence, read N- to C-terminus: Chaperone protein TorD (199 aa).

The protein belongs to the TorD/DmsD family. TorD subfamily.

It is found in the cytoplasm. Its function is as follows. Involved in the biogenesis of TorA. Acts on TorA before the insertion of the molybdenum cofactor and, as a result, probably favors a conformation of the apoenzyme that is competent for acquiring the cofactor. This Escherichia coli O139:H28 (strain E24377A / ETEC) protein is Chaperone protein TorD.